Reading from the N-terminus, the 262-residue chain is MINRSAIVHPSSIIEEGAIIHSDVHVGPFCFIGAQVEIGARTLLKSHIVVNGITQIGEDNQIYQFASLGEVNQDLKYAKEPTRIEIGNYNQIRESVTIHRGTVQGGQVTKIGNSNLFMINVHIAHDCIIGNNCIMANNVTLGGHVKVDDYTIIGGMTAVHQFCLVGSHVMIGGCSGVVQDIPPFIIAQGNHATQFGLNIEGLKRRGFSRSAVHAIRDAYKILYRSNKTVEGAKVALKLLSTEHPIINEFVDFLTRSQRGIIR.

It belongs to the transferase hexapeptide repeat family. LpxA subfamily. In terms of assembly, homotrimer.

The protein resides in the cytoplasm. The catalysed reaction is a (3R)-hydroxyacyl-[ACP] + UDP-N-acetyl-alpha-D-glucosamine = a UDP-3-O-[(3R)-3-hydroxyacyl]-N-acetyl-alpha-D-glucosamine + holo-[ACP]. It functions in the pathway glycolipid biosynthesis; lipid IV(A) biosynthesis; lipid IV(A) from (3R)-3-hydroxytetradecanoyl-[acyl-carrier-protein] and UDP-N-acetyl-alpha-D-glucosamine: step 1/6. Its function is as follows. Involved in the biosynthesis of lipid A, a phosphorylated glycolipid that anchors the lipopolysaccharide to the outer membrane of the cell. The chain is Acyl-[acyl-carrier-protein]--UDP-N-acetylglucosamine O-acyltransferase from Blochmanniella floridana.